The sequence spans 700 residues: Suprabasin (700 aa).

Residues 1–23 (MYLVSLLSSCCLLVLLGTLPARA) form the signal peptide. 3 disordered regions span residues 133–158 (QGGS…VANK), 183–258 (HAFG…VADK), and 283–391 (HAFG…GAHH). The stretch at 488-546 (KEAEKVAHGVQNGVNQAQKEAEKVAHGVQNGVNQAQKEAEKVAHGVQNGVNQAQKEAEK) forms a coiled coil. The segment covering 641–654 (GVNQPSKEANQLLN) has biased composition (polar residues). A disordered region spans residues 641–669 (GVNQPSKEANQLLNGSHQGQGGYGGQHGG). Residues 658-668 (QGQGGYGGQHG) show a composition bias toward gly residues.

In terms of tissue distribution, detected in epidermis, in suprabasal keratinocytes. Detected in suprabasal layers of embryonic epidermis and in stratified layers of embryonic tongue and palate. Detected in adult stomach.

It is found in the secreted. This is Suprabasin (Sbsn) from Mus musculus (Mouse).